The primary structure comprises 183 residues: Capsid protein (183 aa).

The tract at residues 136-183 (NAPILSTLPETTVVRRRGRSPRRRTPSPRRRRSQSPRRRRSQSRESQC) is disordered. A compositionally biased stretch (basic residues) spans 149–176 (VRRRGRSPRRRTPSPRRRRSQSPRRRRS). Phosphoserine; by host occurs at positions 155, 162, and 170. The 1; half-length repeat unit spans residues 155–161 (SPRRRTP). A 3 X 8 AA repeats of S-P-R-R-R-[PR]-S-Q region spans residues 155–177 (SPRRRTPSPRRRRSQSPRRRRSQ). A Bipartite nuclear localization signal motif is present at residues 158–175 (RRTPSPRRRRSQSPRRRR). Tandem repeats lie at residues 162-169 (SPRRRRSQ) and 170-177 (SPRRRRSQ). The RNA binding stretch occupies residues 177 to 183 (QSRESQC).

Belongs to the orthohepadnavirus core antigen family. Homodimerizes, then multimerizes. Interacts with cytosol exposed regions of viral L glycoprotein present in the reticulum-to-Golgi compartment. Interacts with human FLNB. Phosphorylated form interacts with host importin alpha; this interaction depends on the exposure of the NLS, which itself depends upon genome maturation and/or phosphorylation of the capsid protein. Interacts with host NUP153. In terms of processing, phosphorylated by host SRPK1, SRPK2, and maybe protein kinase C or GAPDH. Phosphorylation is critical for pregenomic RNA packaging. Protein kinase C phosphorylation is stimulated by HBx protein and may play a role in transport of the viral genome to the nucleus at the late step during the viral replication cycle.

The protein localises to the virion. The protein resides in the host cytoplasm. Its function is as follows. Self assembles to form an icosahedral capsid. Most capsids appear to be large particles with an icosahedral symmetry of T=4 and consist of 240 copies of capsid protein, though a fraction forms smaller T=3 particles consisting of 180 capsid proteins. Entering capsids are transported along microtubules to the nucleus. Phosphorylation of the capsid is thought to induce exposure of nuclear localization signal in the C-terminal portion of the capsid protein that allows binding to the nuclear pore complex via the importin (karyopherin-) alpha and beta. Capsids are imported in intact form through the nuclear pore into the nuclear basket, where it probably binds NUP153. Only capsids that contain the mature viral genome can release the viral DNA and capsid protein into the nucleoplasm. Immature capsids get stuck in the basket. Capsids encapsulate the pre-genomic RNA and the P protein. Pre-genomic RNA is reverse-transcribed into DNA while the capsid is still in the cytoplasm. The capsid can then either be directed to the nucleus, providing more genomes for transcription, or bud through the endoplasmic reticulum to provide new virions. This Homo sapiens (Human) protein is Capsid protein.